We begin with the raw amino-acid sequence, 327 residues long: Eukaryotic translation initiation factor 3 subunit I (327 aa).

WD repeat units follow at residues glycine 8–threonine 47, glycine 50–lysine 89, glutamate 147–serine 186, aspartate 189–threonine 228, and glycine 286–glutamate 327.

It belongs to the eIF-3 subunit I family. Component of the eukaryotic translation initiation factor 3 (eIF-3) complex.

The protein resides in the cytoplasm. Its function is as follows. Component of the eukaryotic translation initiation factor 3 (eIF-3) complex, which is involved in protein synthesis of a specialized repertoire of mRNAs and, together with other initiation factors, stimulates binding of mRNA and methionyl-tRNAi to the 40S ribosome. The eIF-3 complex specifically targets and initiates translation of a subset of mRNAs involved in cell proliferation. The protein is Eukaryotic translation initiation factor 3 subunit I of Anopheles gambiae (African malaria mosquito).